The following is a 180-amino-acid chain: ATP synthase subunit delta (180 aa).

Belongs to the ATPase delta chain family. F-type ATPases have 2 components, F(1) - the catalytic core - and F(0) - the membrane proton channel. F(1) has five subunits: alpha(3), beta(3), gamma(1), delta(1), epsilon(1). F(0) has three main subunits: a(1), b(2) and c(10-14). The alpha and beta chains form an alternating ring which encloses part of the gamma chain. F(1) is attached to F(0) by a central stalk formed by the gamma and epsilon chains, while a peripheral stalk is formed by the delta and b chains.

The protein localises to the cell membrane. Its function is as follows. F(1)F(0) ATP synthase produces ATP from ADP in the presence of a proton or sodium gradient. F-type ATPases consist of two structural domains, F(1) containing the extramembraneous catalytic core and F(0) containing the membrane proton channel, linked together by a central stalk and a peripheral stalk. During catalysis, ATP synthesis in the catalytic domain of F(1) is coupled via a rotary mechanism of the central stalk subunits to proton translocation. Functionally, this protein is part of the stalk that links CF(0) to CF(1). It either transmits conformational changes from CF(0) to CF(1) or is implicated in proton conduction. The chain is ATP synthase subunit delta from Bacillus cereus (strain B4264).